The sequence spans 273 residues: Dermonecrotic toxin LsaSicTox-alphaIB1bi (273 aa).

Residue His5 is part of the active site. Residues Glu25 and Asp27 each contribute to the Mg(2+) site. His41 functions as the Nucleophile in the catalytic mechanism. Cystine bridges form between Cys45–Cys51 and Cys47–Cys190. Asp85 is a Mg(2+) binding site.

It belongs to the arthropod phospholipase D family. Class II subfamily. Mg(2+) is required as a cofactor. In terms of tissue distribution, expressed by the venom gland.

Its subcellular location is the secreted. It catalyses the reaction an N-(acyl)-sphingosylphosphocholine = an N-(acyl)-sphingosyl-1,3-cyclic phosphate + choline. It carries out the reaction an N-(acyl)-sphingosylphosphoethanolamine = an N-(acyl)-sphingosyl-1,3-cyclic phosphate + ethanolamine. The catalysed reaction is a 1-acyl-sn-glycero-3-phosphocholine = a 1-acyl-sn-glycero-2,3-cyclic phosphate + choline. The enzyme catalyses a 1-acyl-sn-glycero-3-phosphoethanolamine = a 1-acyl-sn-glycero-2,3-cyclic phosphate + ethanolamine. Its function is as follows. Dermonecrotic toxins cleave the phosphodiester linkage between the phosphate and headgroup of certain phospholipids (sphingolipid and lysolipid substrates), forming an alcohol (often choline) and a cyclic phosphate. This toxin acts on sphingomyelin (SM). It may also act on ceramide phosphoethanolamine (CPE), lysophosphatidylcholine (LPC) and lysophosphatidylethanolamine (LPE), but not on lysophosphatidylserine (LPS), and lysophosphatidylglycerol (LPG). It acts by transphosphatidylation, releasing exclusively cyclic phosphate products as second products. Induces dermonecrosis, hemolysis, increased vascular permeability, edema, inflammatory response, and platelet aggregation. The protein is Dermonecrotic toxin LsaSicTox-alphaIB1bi of Loxosceles sabina (Tucson recluse spider).